Reading from the N-terminus, the 418-residue chain is Secernin-3 (418 aa).

Residues 1 to 5 (MEPYS) constitute a propeptide that is removed on maturation. The active site involves cysteine 6. Position 6 is a glyoxylic acid (Cys); alternate (cysteine 6). Cysteine 6 carries the pyruvic acid (Cys); alternate modification.

Belongs to the peptidase C69 family. Secernin subfamily.

Plays a role in thermal nociception. The protein is Secernin-3 (Scrn3) of Mus musculus (Mouse).